The chain runs to 260 residues: Tropinone reductase homolog At2g29330 (260 aa).

Residue 13-37 participates in NADP(+) binding; the sequence is LVTGGASGIGHAIVEELAGFGAKIH. Position 146 (Ser-146) interacts with substrate. The active-site Proton acceptor is Tyr-159.

It belongs to the short-chain dehydrogenases/reductases (SDR) family. SDR65C subfamily.

In terms of biological role, reductase active only on small flexible lipophilic carbonyls. No activity with cyclic monoterpenes, tropinone, nitrogen-containing tropinone analogs, tropine or pseudotropine as substrate. In Arabidopsis thaliana (Mouse-ear cress), this protein is Tropinone reductase homolog At2g29330.